Consider the following 514-residue polypeptide: MDVIKKKHWWQSDALKWSVLGLLGLLVGYLVVLMYAQGEYLFAITTLILSSAGLYIFANRKAYAWRYVYPGMAGMGLFVLFPLVCTIAIAFTNYSSTNQLTFERAQEVLLDRSWQAGKTYNFGLYPAGDEWQLALSDGETGKNYLSDAFKFGREQKLQLKETTAQPEGERANLRVITQNRQALSDITAILPDGNKVMMSSLRQFSGTQPLYTLDGDGTLTNNQSGVKYRPNNQIGFYQSITADGNWGDEKLSPGYTVTTGWKNFTRVFTDEGIQKPFLAIFVWTVVFSLITVFLTVAVGMVLACLVQWEALRGKAVYRVLLILPYAVPSFISILIFKGLFNQSFGEINMMLSALFGVKPAWFSDPTTARTMLIIVNTWLGYPYMMILCMGLLKAIPDDLYEASAMDGAGPFQNFFKITLPLLIKPLTPLMIASFAFNFNNFVLIQLLTNGGPDRLGTTTPAGYTDLLVNYTYRIAFEGGGGQDFGLAAAIATLIFLLVGALAIVNLKATRMKFD.

Topologically, residues 1-16 are cytoplasmic; it reads MDVIKKKHWWQSDALK. A helical transmembrane segment spans residues 17-36; it reads WSVLGLLGLLVGYLVVLMYA. Residues 37-39 are Periplasmic-facing; the sequence is QGE. A helical membrane pass occupies residues 40–57; sequence YLFAITTLILSSAGLYIF. The Cytoplasmic portion of the chain corresponds to 58 to 69; sequence ANRKAYAWRYVY. The helical transmembrane segment at 70 to 92 threads the bilayer; it reads PGMAGMGLFVLFPLVCTIAIAFT. The Periplasmic segment spans residues 93-283; the sequence is NYSSTNQLTF…QKPFLAIFVW (191 aa). Residues 281-505 form the ABC transmembrane type-1 domain; the sequence is FVWTVVFSLI…LLVGALAIVN (225 aa). The chain crosses the membrane as a helical span at residues 284-306; it reads TVVFSLITVFLTVAVGMVLACLV. The Cytoplasmic segment spans residues 307-318; that stretch reads QWEALRGKAVYR. The helical transmembrane segment at 319–341 threads the bilayer; the sequence is VLLILPYAVPSFISILIFKGLFN. Residues 342–369 are Periplasmic-facing; the sequence is QSFGEINMMLSALFGVKPAWFSDPTTAR. Residues 370 to 392 traverse the membrane as a helical segment; the sequence is TMLIIVNTWLGYPYMMILCMGLL. The Cytoplasmic segment spans residues 393-412; the sequence is KAIPDDLYEASAMDGAGPFQ. A helical transmembrane segment spans residues 413–435; sequence NFFKITLPLLIKPLTPLMIASFA. At 436–483 the chain is on the periplasmic side; it reads FNFNNFVLIQLLTNGGPDRLGTTTPAGYTDLLVNYTYRIAFEGGGGQD. A helical transmembrane segment spans residues 484 to 506; it reads FGLAAAIATLIFLLVGALAIVNL. Residues 507-514 are Cytoplasmic-facing; sequence KATRMKFD.

The protein belongs to the binding-protein-dependent transport system permease family. MalFG subfamily. The complex is composed of two ATP-binding proteins (MalK), two transmembrane proteins (MalG and MalF) and a solute-binding protein (MalE).

The protein localises to the cell inner membrane. Part of the ABC transporter complex MalEFGK involved in maltose/maltodextrin import. Probably responsible for the translocation of the substrate across the membrane. The chain is Maltose/maltodextrin transport system permease protein MalF (malF) from Escherichia coli O157:H7.